A 344-amino-acid polypeptide reads, in one-letter code: tRNA N6-adenosine threonylcarbamoyltransferase (344 aa).

Positions 111 and 115 each coordinate Fe cation. Substrate contacts are provided by residues 134-138, aspartate 167, glycine 180, and asparagine 274; that span reads LVSGG. Residue aspartate 302 coordinates Fe cation.

The protein belongs to the KAE1 / TsaD family. Requires Fe(2+) as cofactor.

It localises to the cytoplasm. It catalyses the reaction L-threonylcarbamoyladenylate + adenosine(37) in tRNA = N(6)-L-threonylcarbamoyladenosine(37) in tRNA + AMP + H(+). Required for the formation of a threonylcarbamoyl group on adenosine at position 37 (t(6)A37) in tRNAs that read codons beginning with adenine. Is involved in the transfer of the threonylcarbamoyl moiety of threonylcarbamoyl-AMP (TC-AMP) to the N6 group of A37, together with TsaE and TsaB. TsaD likely plays a direct catalytic role in this reaction. The chain is tRNA N6-adenosine threonylcarbamoyltransferase from Dechloromonas aromatica (strain RCB).